The sequence spans 188 residues: Elongation factor P (188 aa).

The residue at position 34 (Lys-34) is an N6-(3,6-diaminohexanoyl)-5-hydroxylysine.

The protein belongs to the elongation factor P family. In terms of processing, may be beta-lysylated on the epsilon-amino group of Lys-34 by the combined action of EpmA and EpmB, and then hydroxylated on the C5 position of the same residue by EpmC (if this protein is present). Lysylation is critical for the stimulatory effect of EF-P on peptide-bond formation. The lysylation moiety may extend toward the peptidyltransferase center and stabilize the terminal 3-CCA end of the tRNA. Hydroxylation of the C5 position on Lys-34 may allow additional potential stabilizing hydrogen-bond interactions with the P-tRNA.

It localises to the cytoplasm. The protein operates within protein biosynthesis; polypeptide chain elongation. Functionally, involved in peptide bond synthesis. Alleviates ribosome stalling that occurs when 3 or more consecutive Pro residues or the sequence PPG is present in a protein, possibly by augmenting the peptidyl transferase activity of the ribosome. Modification of Lys-34 is required for alleviation. This Pasteurella multocida (strain Pm70) protein is Elongation factor P.